Reading from the N-terminus, the 253-residue chain is Probable transcriptional regulatory protein AM1_1847 (253 aa).

It belongs to the TACO1 family.

The protein resides in the cytoplasm. This is Probable transcriptional regulatory protein AM1_1847 from Acaryochloris marina (strain MBIC 11017).